We begin with the raw amino-acid sequence, 679 residues long: ATP-dependent zinc metalloprotease FtsH (679 aa).

Residues 1–6 are Cytoplasmic-facing; sequence MNRIFR. The helical transmembrane segment at 7 to 27 threads the bilayer; sequence NTIFYLLIFLVIVGIVSVFNS. The Extracellular segment spans residues 28-114; the sequence is DQTETENVSF…IEPADETSGW (87 aa). A helical membrane pass occupies residues 115-135; it reads VQFFTGIIPFIIIFILFFFLL. Residues 136 to 679 are Cytoplasmic-facing; that stretch reads SQAQGGGSRV…SFEDDTNKKE (544 aa). 206–213 contributes to the ATP binding site; it reads GPPGTGKT. Position 428 (histidine 428) interacts with Zn(2+). Residue glutamate 429 is part of the active site. 2 residues coordinate Zn(2+): histidine 432 and aspartate 504. Basic and acidic residues-rich tracts occupy residues 621–642 and 658–679; these read LEKEKASESDVKVNINSKKEET and PIEKDPSVEDNRSFEDDTNKKE. The interval 621–679 is disordered; it reads LEKEKASESDVKVNINSKKEETPQVEAEQPQEPNTDEPIEKDPSVEDNRSFEDDTNKKE.

The protein in the central section; belongs to the AAA ATPase family. This sequence in the C-terminal section; belongs to the peptidase M41 family. Homohexamer. Zn(2+) serves as cofactor.

The protein resides in the cell membrane. Acts as a processive, ATP-dependent zinc metallopeptidase for both cytoplasmic and membrane proteins. Plays a role in the quality control of integral membrane proteins. This chain is ATP-dependent zinc metalloprotease FtsH, found in Alkalihalophilus pseudofirmus (strain ATCC BAA-2126 / JCM 17055 / OF4) (Bacillus pseudofirmus).